The following is a 1447-amino-acid chain: Regulator of G-protein signaling 12 (1447 aa).

The tract at residues 1–21 (MFRAGEASKRPLPGPSPPRVR) is disordered. In terms of domain architecture, PDZ spans 22 to 98 (SVEVARGRAG…GVLHMVIAEG (77 aa)). A phosphoserine mark is found at Ser-172 and Ser-195. Lys-196 participates in a covalent cross-link: Glycyl lysine isopeptide (Lys-Gly) (interchain with G-Cter in SUMO2). A PID domain is found at 228–340 (VAMIVGYLGS…GALRTSCHVF (113 aa)). Disordered regions lie at residues 410 to 429 (ADAH…IGNF) and 443 to 482 (LGGS…DPEG). Polar residues predominate over residues 413–425 (HQNNSTSSNSDSG). Over residues 451-464 (GPGGSAWDGVGGRG) the composition is skewed to gly residues. Arg-524 and Arg-633 each carry omega-N-methylarginine. Positions 618–652 (NVRKTKEDKKGSKFGRGTGLTQPSQRTSARRSFGR) are disordered. 2 positions are modified to phosphoserine: Ser-661 and Ser-671. Positions 715 to 832 (SFERLLQDPV…LKSPLYQECI (118 aa)) constitute an RGS domain. Polar residues predominate over residues 843–853 (DSQQVPSSPAS). The tract at residues 843-941 (DSQQVPSSPA…RESQGSVSSA (99 aa)) is disordered. Phosphoserine is present on residues Ser-850 and Ser-879. Residues 914-923 (EHGDHADDAL) are compositionally biased toward basic and acidic residues. A Phosphoserine modification is found at Ser-943. 2 consecutive RBD domains span residues 962-1032 (KHCC…LEKR) and 1034-1104 (LFRL…LEEK). The span at 1103-1117 (EKDPSRGKASADKQK) shows a compositional bias: basic and acidic residues. The tract at residues 1103–1169 (EKDPSRGKAS…RDPRLSKREE (67 aa)) is disordered. Residues 1122–1136 (KQNTAVNSSSRNHSA) show a composition bias toward polar residues. Over residues 1151–1169 (IKGENGKNARDPRLSKREE) the composition is skewed to basic and acidic residues. The 23-residue stretch at 1187–1209 (AEEFFELISKAQSNRADDQRGLL) folds into the GoLoco domain. The interval 1240–1447 (GFSKRSATGN…KTSAHHATFV (208 aa)) is disordered. Over residues 1244 to 1258 (RSATGNGRESASQPG) the composition is skewed to polar residues. Composition is skewed to low complexity over residues 1267-1280 (SSDS…SASS) and 1289-1298 (PPGQKSPSGP). Polar residues predominate over residues 1301–1313 (TPQSPVSLAQEGT).

Interacts with GNAI1. Interacts with GNAI2 and GNAI3; the interactions are GDP-dependent. As to expression, isoform 3 is brain specific.

It localises to the nucleus. Its subcellular location is the cytoplasm. The protein resides in the cell projection. It is found in the dendrite. The protein localises to the synapse. It localises to the nucleus matrix. Its function is as follows. Regulates G protein-coupled receptor signaling cascades. Inhibits signal transduction by increasing the GTPase activity of G protein alpha subunits, thereby driving them into their inactive GDP-bound form. Functionally, behaves as a cell cycle-dependent transcriptional repressor, promoting inhibition of S-phase DNA synthesis. In Homo sapiens (Human), this protein is Regulator of G-protein signaling 12 (RGS12).